A 255-amino-acid chain; its full sequence is tRNA (guanine-N(1)-)-methyltransferase (255 aa).

S-adenosyl-L-methionine is bound by residues G113 and I133–L138.

This sequence belongs to the RNA methyltransferase TrmD family. As to quaternary structure, homodimer.

The protein localises to the cytoplasm. The catalysed reaction is guanosine(37) in tRNA + S-adenosyl-L-methionine = N(1)-methylguanosine(37) in tRNA + S-adenosyl-L-homocysteine + H(+). In terms of biological role, specifically methylates guanosine-37 in various tRNAs. This Salmonella paratyphi A (strain ATCC 9150 / SARB42) protein is tRNA (guanine-N(1)-)-methyltransferase.